Reading from the N-terminus, the 217-residue chain is Adenylate kinase (217 aa).

10–15 (GAGKGT) is a binding site for ATP. The segment at 30 to 59 (STGDMLRAAVKAGTPLGVEAKKVMDAGGLV) is NMP. Residues Thr31, Arg36, 57 to 59 (GLV), 85 to 88 (GFPR), and Gln92 each bind AMP. The segment at 122–159 (GRRAHLASGRTYHVKYNPPKVAGKDDLTGEDLVQRDDD) is LID. Residues Arg123 and 132-133 (TY) each bind ATP. Arg156 and Arg167 together coordinate AMP. Gly203 lines the ATP pocket.

It belongs to the adenylate kinase family. Monomer.

It localises to the cytoplasm. The enzyme catalyses AMP + ATP = 2 ADP. Its pathway is purine metabolism; AMP biosynthesis via salvage pathway; AMP from ADP: step 1/1. Catalyzes the reversible transfer of the terminal phosphate group between ATP and AMP. Plays an important role in cellular energy homeostasis and in adenine nucleotide metabolism. The chain is Adenylate kinase from Aromatoleum aromaticum (strain DSM 19018 / LMG 30748 / EbN1) (Azoarcus sp. (strain EbN1)).